The primary structure comprises 204 residues: Putative 3-methyladenine DNA glycosylase (204 aa).

Belongs to the DNA glycosylase MPG family.

The polypeptide is Putative 3-methyladenine DNA glycosylase (Bacillus cytotoxicus (strain DSM 22905 / CIP 110041 / 391-98 / NVH 391-98)).